A 55-amino-acid chain; its full sequence is Large ribosomal subunit protein bL33B (55 aa).

Belongs to the bacterial ribosomal protein bL33 family.

This chain is Large ribosomal subunit protein bL33B, found in Salinispora arenicola (strain CNS-205).